The primary structure comprises 250 residues: Undecaprenyl-diphosphatase (250 aa).

The next 7 helical transmembrane spans lie at 35–55 (DLSVFALLHLATLAAIVIFVG), 73–93 (INLTLKIIVSTIPAAIFGVLL), 100–120 (SLSNLKIISFFFLVTSAALLI), 146–166 (ALAIFPGISRSGFTLFGSLLI), 171–191 (EIALKYSFLVSIPVILGAGLL), 200–220 (SYSISSAIVAFFFGLLSLFIL), and 229–249 (LKIFSAYCIFISIFSFVLGGI).

Belongs to the UppP family.

It is found in the cell inner membrane. It carries out the reaction di-trans,octa-cis-undecaprenyl diphosphate + H2O = di-trans,octa-cis-undecaprenyl phosphate + phosphate + H(+). In terms of biological role, catalyzes the dephosphorylation of undecaprenyl diphosphate (UPP). Confers resistance to bacitracin. This chain is Undecaprenyl-diphosphatase, found in Thermosipho melanesiensis (strain DSM 12029 / CIP 104789 / BI429).